The following is a 196-amino-acid chain: Peptidoglycan recognition protein (196 aa).

An N-terminal signal peptide occupies residues 1-23 (MARLHSAVVLALALSSLLTEIAA). 2 disulfide bridges follow: Cys-25–Cys-147 and Cys-61–Cys-67. An N-acetylmuramoyl-L-alanine amidase domain is found at 46 to 173 (RPVSLVIVQH…RQLIASESPG (128 aa)).

It belongs to the N-acetylmuramoyl-L-alanine amidase 2 family. In terms of assembly, monomer. As to expression, constitutively expressed in fat body, epithelial cells and hemocytes. Not detected in Malpighian tubules, silk gland or midgut.

In terms of biological role, binds specifically to peptidoglycan and triggers the propenoloxidase cascade which is an important insect defense mechanism. This chain is Peptidoglycan recognition protein, found in Bombyx mori (Silk moth).